The following is a 632-amino-acid chain: 1-deoxy-D-xylulose-5-phosphate synthase (632 aa).

Thiamine diphosphate is bound by residues His-72 and 113–115; that span reads GHA. Residue Asp-144 coordinates Mg(2+). Residues 145-146, Asn-174, Tyr-285, and Glu-368 contribute to the thiamine diphosphate site; that span reads GA. Asn-174 serves as a coordination point for Mg(2+).

This sequence belongs to the transketolase family. DXPS subfamily. In terms of assembly, homodimer. Mg(2+) serves as cofactor. It depends on thiamine diphosphate as a cofactor.

It carries out the reaction D-glyceraldehyde 3-phosphate + pyruvate + H(+) = 1-deoxy-D-xylulose 5-phosphate + CO2. It functions in the pathway metabolic intermediate biosynthesis; 1-deoxy-D-xylulose 5-phosphate biosynthesis; 1-deoxy-D-xylulose 5-phosphate from D-glyceraldehyde 3-phosphate and pyruvate: step 1/1. Its function is as follows. Catalyzes the acyloin condensation reaction between C atoms 2 and 3 of pyruvate and glyceraldehyde 3-phosphate to yield 1-deoxy-D-xylulose-5-phosphate (DXP). This is 1-deoxy-D-xylulose-5-phosphate synthase from Cyanothece sp. (strain PCC 7425 / ATCC 29141).